Here is a 279-residue protein sequence, read N- to C-terminus: Monoacylglycerol lipase (279 aa).

Residue Ser110 is the Nucleophile of the active site. Residues Asp226 and His256 each act as charge relay system in the active site.

The protein belongs to the AB hydrolase superfamily. As to quaternary structure, monomer.

The protein resides in the secreted. It localises to the cell wall. The enzyme catalyses a 1-acylglycerol + H2O = glycerol + a fatty acid + H(+). It carries out the reaction Hydrolyzes glycerol monoesters of long-chain fatty acids.. The catalysed reaction is 1-butyrylglycerol + H2O = butanoate + glycerol + H(+). It catalyses the reaction 1-octanoylglycerol + H2O = octanoate + glycerol + H(+). The enzyme catalyses 1-decanoylglycerol + H2O = decanoate + glycerol + H(+). It carries out the reaction 1-dodecanoylglycerol + H2O = dodecanoate + glycerol + H(+). The catalysed reaction is 1-tetradecanoylglycerol + H2O = tetradecanoate + glycerol + H(+). It catalyses the reaction 1-(9Z-octadecenoyl)-glycerol + H2O = glycerol + (9Z)-octadecenoate + H(+). The enzyme catalyses 2-(9Z-octadecenoyl)-glycerol + H2O = glycerol + (9Z)-octadecenoate + H(+). With respect to regulation, inhibited by the serine esterase inhibitors PMSF (100%), E600 (80%) and THL (22%). Virtual screening identified a tautomer of ZINC13451138, known inhibitor for HIV-1 integrase, as a potential inhibitor. Functionally, involved in the hydrolysis of exogenous host lipids during chronic infection. Catalyzes the hydrolysis of both monoacylglycerols (MAG) and diacylglycerols (DAG), with a preference for MAG. It hydrolyzes 2-MAG, 1-3-MAG and MAG with short, medium and long chain fatty acids such as 1-monobutyroyl-rac-glycerol (MC4), 1-mono-octanoyl-rac-glycerol (MC8), 1-monodecanoyl-rac-glycerol (MC10), 1-monolauroyl-rac-glycerol (MC12), 1-monomyristoyl-rac-glycerol (MC14) and 1-mono-oleyl-rac-glycerol (MC18:1). Also able to hydrolyze DAG with short (DiC6) and medium (DiC10) fatty acid chains, but not with longest fatty acid chains. Can also hydrolyze vinyl laurate (VC12), vinyl butyrate (VC4) and vinyl propionate (VC3). Its function is as follows. Induces an inflammatory response and cell apoptosis in the host cells. Increases expression of IL-6, NF-kappaB, TLR-2, TLR-6, TNF-alpha, and MyD88 in mouse alveolar macrophage RAW264.7 cells. Persistent expression induces RAW264.7 cell apoptosis in vitro. This chain is Monoacylglycerol lipase, found in Mycobacterium tuberculosis (strain ATCC 25618 / H37Rv).